The primary structure comprises 74 residues: uncharacterized protein (74 aa).

This is an uncharacterized protein from Dictyostelium discoideum (Social amoeba).